The following is a 95-amino-acid chain: Co-chaperonin GroES (95 aa).

Belongs to the GroES chaperonin family. Heptamer of 7 subunits arranged in a ring. Interacts with the chaperonin GroEL.

The protein resides in the cytoplasm. Its function is as follows. Together with the chaperonin GroEL, plays an essential role in assisting protein folding. The GroEL-GroES system forms a nano-cage that allows encapsulation of the non-native substrate proteins and provides a physical environment optimized to promote and accelerate protein folding. GroES binds to the apical surface of the GroEL ring, thereby capping the opening of the GroEL channel. The protein is Co-chaperonin GroES of Streptococcus thermophilus (strain ATCC BAA-491 / LMD-9).